Here is a 387-residue protein sequence, read N- to C-terminus: Formate-dependent phosphoribosylglycinamide formyltransferase (387 aa).

Residues 12–13 (EL) and Glu72 contribute to the N(1)-(5-phospho-beta-D-ribosyl)glycinamide site. ATP is bound by residues Arg104, Lys145, 150–155 (SSGKGQ), 185–188 (EEFI), and Glu193. Positions 109–300 (DLAAKDLKLL…EFELHIRAIL (192 aa)) constitute an ATP-grasp domain. Positions 258 and 270 each coordinate Mg(2+). N(1)-(5-phospho-beta-D-ribosyl)glycinamide contacts are provided by residues Asp277, Lys348, and 355-356 (RR).

It belongs to the PurK/PurT family. In terms of assembly, homodimer.

It catalyses the reaction N(1)-(5-phospho-beta-D-ribosyl)glycinamide + formate + ATP = N(2)-formyl-N(1)-(5-phospho-beta-D-ribosyl)glycinamide + ADP + phosphate + H(+). It participates in purine metabolism; IMP biosynthesis via de novo pathway; N(2)-formyl-N(1)-(5-phospho-D-ribosyl)glycinamide from N(1)-(5-phospho-D-ribosyl)glycinamide (formate route): step 1/1. Involved in the de novo purine biosynthesis. Catalyzes the transfer of formate to 5-phospho-ribosyl-glycinamide (GAR), producing 5-phospho-ribosyl-N-formylglycinamide (FGAR). Formate is provided by PurU via hydrolysis of 10-formyl-tetrahydrofolate. This is Formate-dependent phosphoribosylglycinamide formyltransferase from Leptospira borgpetersenii serovar Hardjo-bovis (strain JB197).